The following is a 307-amino-acid chain: Cysteine synthase (307 aa).

Lys-42 is subject to N6-(pyridoxal phosphate)lysine. Pyridoxal 5'-phosphate contacts are provided by residues Asn-72, 176–180, and Ser-263; that span reads GTGGH.

The protein belongs to the cysteine synthase/cystathionine beta-synthase family. Pyridoxal 5'-phosphate serves as cofactor.

It carries out the reaction O-acetyl-L-serine + hydrogen sulfide = L-cysteine + acetate. Its pathway is amino-acid biosynthesis; L-cysteine biosynthesis; L-cysteine from L-serine: step 2/2. The polypeptide is Cysteine synthase (cysK) (Flavobacterium sp. (strain K3-15 / DSM ID92-509)).